A 241-amino-acid chain; its full sequence is ATP synthase subunit a (241 aa).

5 consecutive transmembrane segments (helical) span residues 30–50 (GQVF…VVVG), 91–111 (FIGT…LVPW), 128–148 (INTT…AGLS), 193–213 (LVVA…VMFL), and 214–234 (GLFT…YYIG).

This sequence belongs to the ATPase A chain family. As to quaternary structure, F-type ATPases have 2 components, CF(1) - the catalytic core - and CF(0) - the membrane proton channel. CF(1) has five subunits: alpha(3), beta(3), gamma(1), delta(1), epsilon(1). CF(0) has four main subunits: a, b, b' and c.

It is found in the cellular thylakoid membrane. Functionally, key component of the proton channel; it plays a direct role in the translocation of protons across the membrane. The chain is ATP synthase subunit a from Prochlorococcus marinus (strain MIT 9303).